The primary structure comprises 2537 residues: Centrosomal protein of 192 kDa (2537 aa).

Disordered stretches follow at residues 69–138 (FSVP…ATES) and 288–308 (HSSETTHKESEESQVICLPGT). The span at 70 to 81 (SVPSGSSPGSQS) shows a compositional bias: low complexity. A compositionally biased stretch (polar residues) spans 106 to 122 (VESQRLSNALSKQSALQ). Residues 288–298 (HSSETTHKESE) are compositionally biased toward basic and acidic residues. Serine 812 carries the phosphoserine modification. Disordered regions lie at residues 950-1021 (VTFE…QQQP), 1043-1064 (VSEPESSYPTTATDDALEDRKS), 1101-1158 (KGTL…WTSN), and 1182-1234 (ATSH…STVH). The segment covering 960-970 (PKNSDLKNTSP) has biased composition (polar residues). Over residues 984 to 1005 (FRPSTSPLSHSSPSEISGTSSS) the composition is skewed to low complexity. 2 stretches are compositionally biased toward polar residues: residues 1046–1055 (PESSYPTTAT) and 1103–1112 (TLSSIIQNNS). The segment covering 1128 to 1141 (EYVKPDFRWSKDPS) has biased composition (basic and acidic residues). Residues 1142-1158 (SKSGNLLETSEVGWTSN) show a composition bias toward polar residues. The span at 1195–1207 (EDQRISPKDKSTA) shows a compositional bias: basic and acidic residues. Residues 1213–1234 (GQVSHQTTSENQCTPIPSSTVH) are compositionally biased toward polar residues. Phosphoserine is present on residues serine 1755, serine 2098, and serine 2110. Proline 2313 carries the post-translational modification Hydroxyproline.

In terms of assembly, interacts with SHBG. Interacts with PLK4; this interaction mediates the formation of a ternary complex composed by PLK4, TENT5C and CEP192. Interacts with CCDC66. Hydroxylation by PHD1/EGLN2 at Pro-2313 promotes ubiquitination. In terms of processing, ubiquitinated by a SCF(SKP2) complex following proline hydroxylation. Post-translationally, ubiquitinated in a FBXL13-dependent manner, leading to proteasomal degradation.

The protein resides in the cytoplasm. Its subcellular location is the cytoskeleton. It is found in the microtubule organizing center. It localises to the centrosome. The protein localises to the centriole. Required for mitotic centrosome maturation and bipolar spindle assembly. Appears to be a major regulator of pericentriolar material (PCM) recruitment, centrosome maturation, and centriole duplication. Centrosome-specific activating scaffold for AURKA and PLK1. This Homo sapiens (Human) protein is Centrosomal protein of 192 kDa.